We begin with the raw amino-acid sequence, 450 residues long: Phosphoglucosamine mutase (450 aa).

The Phosphoserine intermediate role is filled by Ser103. 4 residues coordinate Mg(2+): Ser103, Asp243, Asp245, and Asp247. Residue Ser103 is modified to Phosphoserine.

Belongs to the phosphohexose mutase family. Requires Mg(2+) as cofactor. Post-translationally, activated by phosphorylation.

It catalyses the reaction alpha-D-glucosamine 1-phosphate = D-glucosamine 6-phosphate. Its function is as follows. Catalyzes the conversion of glucosamine-6-phosphate to glucosamine-1-phosphate. This is Phosphoglucosamine mutase from Lactobacillus helveticus (strain DPC 4571).